Consider the following 204-residue polypeptide: Holliday junction branch migration complex subunit RuvA (204 aa).

Positions 1–64 are domain I; that stretch reads MIGKLKGTIE…EDQIRLFGFM (64 aa). A domain II region spans residues 65–143; the sequence is AVLEREWFNL…AFAGEATNIG (79 aa). The tract at residues 144–151 is flexible linker; that stretch reads FKQELGEG. Positions 152–204 are domain III; that stretch reads VAPAPVSDAVSALTNLGYSRDQAANAIAAAMKVAGDEADSAKLIRLGLKELSR.

Belongs to the RuvA family. In terms of assembly, homotetramer. Forms an RuvA(8)-RuvB(12)-Holliday junction (HJ) complex. HJ DNA is sandwiched between 2 RuvA tetramers; dsDNA enters through RuvA and exits via RuvB. An RuvB hexamer assembles on each DNA strand where it exits the tetramer. Each RuvB hexamer is contacted by two RuvA subunits (via domain III) on 2 adjacent RuvB subunits; this complex drives branch migration. In the full resolvosome a probable DNA-RuvA(4)-RuvB(12)-RuvC(2) complex forms which resolves the HJ.

Its subcellular location is the cytoplasm. In terms of biological role, the RuvA-RuvB-RuvC complex processes Holliday junction (HJ) DNA during genetic recombination and DNA repair, while the RuvA-RuvB complex plays an important role in the rescue of blocked DNA replication forks via replication fork reversal (RFR). RuvA specifically binds to HJ cruciform DNA, conferring on it an open structure. The RuvB hexamer acts as an ATP-dependent pump, pulling dsDNA into and through the RuvAB complex. HJ branch migration allows RuvC to scan DNA until it finds its consensus sequence, where it cleaves and resolves the cruciform DNA. This chain is Holliday junction branch migration complex subunit RuvA, found in Rhizobium rhizogenes (strain K84 / ATCC BAA-868) (Agrobacterium radiobacter).